Consider the following 203-residue polypeptide: Dephospho-CoA kinase (203 aa).

Positions 3 to 201 (SVGLTGGIGS…QRYLGYAAAA (199 aa)) constitute a DPCK domain. 11–16 (GSGKTT) is a binding site for ATP.

The protein belongs to the CoaE family.

It localises to the cytoplasm. It carries out the reaction 3'-dephospho-CoA + ATP = ADP + CoA + H(+). Its pathway is cofactor biosynthesis; coenzyme A biosynthesis; CoA from (R)-pantothenate: step 5/5. Functionally, catalyzes the phosphorylation of the 3'-hydroxyl group of dephosphocoenzyme A to form coenzyme A. The sequence is that of Dephospho-CoA kinase from Burkholderia thailandensis (strain ATCC 700388 / DSM 13276 / CCUG 48851 / CIP 106301 / E264).